We begin with the raw amino-acid sequence, 240 residues long: Coiled-coil domain-containing protein 152 (240 aa).

The stretch at 55–223 (MQTKEVAMKQ…LEQRLSVSKD (169 aa)) forms a coiled coil.

In Bos taurus (Bovine), this protein is Coiled-coil domain-containing protein 152 (CCDC152).